A 223-amino-acid chain; its full sequence is N-acetylmuramic acid 6-phosphate phosphatase (223 aa).

Catalysis depends on Asp-9, which acts as the Nucleophile. Mg(2+) contacts are provided by Asp-9, Asp-11, and Asp-168. Asp-11 functions as the Proton donor in the catalytic mechanism.

This sequence belongs to the HAD-like hydrolase superfamily. CbbY/CbbZ/Gph/YieH family. Phosphatase MupP subfamily. Requires Mg(2+) as cofactor.

It carries out the reaction N-acetyl-D-muramate 6-phosphate + H2O = N-acetyl-D-muramate + phosphate. It participates in cell wall biogenesis; peptidoglycan recycling. Its function is as follows. Specifically catalyzes the dephosphorylation of N-acetylmuramate 6-phosphate (MurNAc-6P) to MurNac. Is involved in peptidoglycan recycling as part of a cell wall recycling pathway that bypasses de novo biosynthesis of the peptidoglycan precursor UDP-MurNAc. Plays a role in intrinsic resistance to fosfomycin, which targets the de novo synthesis of UDP-MurNAc. Shows a very low activity on GlcNAc-6P, and neither alpha-1-phosphorylated MurNAc, GlcNAc, or glucose nor glucosamine-6P or glucose-6P can be used as a substrate. The protein is N-acetylmuramic acid 6-phosphate phosphatase of Pseudomonas putida (strain ATCC 47054 / DSM 6125 / CFBP 8728 / NCIMB 11950 / KT2440).